A 297-amino-acid chain; its full sequence is 2,3,4,5-tetrahydropyridine-2,6-dicarboxylate N-succinyltransferase (297 aa).

Residues Asp148 and Glu165 each coordinate Mg(2+). Glu181 serves as the catalytic Acyl-anhydride intermediate. Residues Arg183, Gly198, Ser201, Ala224, 239–240 (EA), Gly247, Lys258, and 271–274 (RRDS) each bind succinyl-CoA.

The protein belongs to the type 2 tetrahydrodipicolinate N-succinyltransferase family. In terms of assembly, homotrimer.

Its subcellular location is the cytoplasm. It carries out the reaction (S)-2,3,4,5-tetrahydrodipicolinate + succinyl-CoA + H2O = (S)-2-succinylamino-6-oxoheptanedioate + CoA. The protein operates within amino-acid biosynthesis; L-lysine biosynthesis via DAP pathway; LL-2,6-diaminopimelate from (S)-tetrahydrodipicolinate (succinylase route): step 1/3. In terms of biological role, catalyzes the conversion of the cyclic tetrahydrodipicolinate (THDP) into the acyclic N-succinyl-L-2-amino-6-oxopimelate using succinyl-CoA. The chain is 2,3,4,5-tetrahydropyridine-2,6-dicarboxylate N-succinyltransferase from Corynebacterium glutamicum (strain ATCC 13032 / DSM 20300 / JCM 1318 / BCRC 11384 / CCUG 27702 / LMG 3730 / NBRC 12168 / NCIMB 10025 / NRRL B-2784 / 534).